Here is a 375-residue protein sequence, read N- to C-terminus: 23S rRNA (uracil(747)-C(5))-methyltransferase RlmC (375 aa).

Residues cysteine 3, cysteine 11, cysteine 14, and cysteine 87 each coordinate [4Fe-4S] cluster. Residues glutamine 212, phenylalanine 241, glutamate 262, and asparagine 307 each contribute to the S-adenosyl-L-methionine site. Cysteine 334 acts as the Nucleophile in catalysis.

This sequence belongs to the class I-like SAM-binding methyltransferase superfamily. RNA M5U methyltransferase family. RlmC subfamily.

The catalysed reaction is uridine(747) in 23S rRNA + S-adenosyl-L-methionine = 5-methyluridine(747) in 23S rRNA + S-adenosyl-L-homocysteine + H(+). Catalyzes the formation of 5-methyl-uridine at position 747 (m5U747) in 23S rRNA. The sequence is that of 23S rRNA (uracil(747)-C(5))-methyltransferase RlmC from Vibrio cholerae serotype O1 (strain ATCC 39541 / Classical Ogawa 395 / O395).